We begin with the raw amino-acid sequence, 439 residues long: Eukaryotic translation initiation factor 2 subunit gamma (439 aa).

The 205-residue stretch at 11–215 (QATLNIGTIG…FIVNYIPEPV (205 aa)) folds into the tr-type G domain. The G1 stretch occupies residues 20 to 27 (GHVAHGKS). 23-28 (AHGKST) is a binding site for GTP. Residues 48–52 (NITIK) form a G2 region. Positions 103–106 (DCPG) are G3. Residues 159–162 (NKID) and 193–195 (AAQ) contribute to the GTP site. A G4 region spans residues 159-162 (NKID). Positions 193–195 (AAQ) are G5. The segment at 415-427 (GEIKDGTCIEPEY) is interacts with CDC123.

The protein belongs to the TRAFAC class translation factor GTPase superfamily. Classic translation factor GTPase family. EIF2G subfamily. In terms of assembly, eukaryotic translation initiation factor 2 eIF2 is a heterotrimeric complex composed of an alpha, a beta and a gamma subunit. The factors eIF-1, eIF-2, eIF-3, TIF5/eIF-5 and methionyl-tRNAi form a multifactor complex (MFC) that may bind to the 40S ribosome.

Its subcellular location is the cytoplasm. It localises to the cytosol. It catalyses the reaction GTP + H2O = GDP + phosphate + H(+). Its function is as follows. As a subunit of eukaryotic initiation factor 2 eIF2, involved in the early steps of protein synthesis. In the presence of GTP, eIF-2 forms a ternary complex with initiator tRNA Met-tRNAi and then recruits the 40S ribosomal complex and initiation factors eIF-1, eIF-1A and eIF-3 to form the 43S pre-initiation complex (43S PIC), a step that determines the rate of protein translation. The 43S PIC binds to mRNA and scans downstream to the initiation codon, where it forms a 48S initiation complex by codon-anticodon base pairing. This leads to the displacement of eIF-1 to allow GTPase-activating protein (GAP) eIF-5-mediated hydrolysis of eIF2-bound GTP. Hydrolysis of GTP and release of Pi, which makes GTP hydrolysis irreversible, causes the release of the eIF-2-GDP binary complex from the 40S subunit, an event that is essential for the subsequent joining of the 60S ribosomal subunit to form an elongation-competent 80S ribosome. In order for eIF-2 to recycle and catalyze another round of initiation, the GDP bound to eIF-2 must be exchanged with GTP by way of a reaction catalyzed by GDP-GTP exchange factor (GEF) eIF-2B. The protein is Eukaryotic translation initiation factor 2 subunit gamma of Encephalitozoon cuniculi (strain GB-M1) (Microsporidian parasite).